The primary structure comprises 606 residues: Elongation factor 4 (606 aa).

A tr-type G domain is found at 7–189 (SRIRNFCIIA…AVVDRVPPPK (183 aa)). GTP is bound by residues 19–24 (DHGKST) and 136–139 (NKID).

The protein belongs to the TRAFAC class translation factor GTPase superfamily. Classic translation factor GTPase family. LepA subfamily.

The protein resides in the cell inner membrane. The enzyme catalyses GTP + H2O = GDP + phosphate + H(+). Functionally, required for accurate and efficient protein synthesis under certain stress conditions. May act as a fidelity factor of the translation reaction, by catalyzing a one-codon backward translocation of tRNAs on improperly translocated ribosomes. Back-translocation proceeds from a post-translocation (POST) complex to a pre-translocation (PRE) complex, thus giving elongation factor G a second chance to translocate the tRNAs correctly. Binds to ribosomes in a GTP-dependent manner. The chain is Elongation factor 4 from Parasynechococcus marenigrum (strain WH8102).